The sequence spans 397 residues: Protein shisa-8 (397 aa).

The first 38 residues, 1 to 38 (MARAGARGLLGGRRPPGLRLALALRLALLLARPPSGRA), serve as a signal peptide directing secretion. Residues 39-138 (GAPEAQGPAA…APRDPGRERS (100 aa)) lie on the Extracellular side of the membrane. N-linked (GlcNAc...) asparagine glycosylation occurs at Asn75. The interval 117–136 (TGRPPARARDTAAPRDPGRE) is disordered. A compositionally biased stretch (basic and acidic residues) spans 123–136 (RARDTAAPRDPGRE). Residues 139-159 (HTAVYAVCGVAALLVLAGIGA) form a helical membrane-spanning segment. At 160–397 (RLGLERAHSP…RTNSKTEVTV (238 aa)) the chain is on the cytoplasmic side. 2 disordered regions span residues 182 to 250 (LLKQ…GGSL) and 281 to 303 (FPALEPSPRQPPARAPRPSPDLP). 2 stretches are compositionally biased toward pro residues: residues 188 to 197 (PQEPLPPTLG) and 288 to 303 (PRQPPARAPRPSPDLP).

This sequence belongs to the shisa family. As to quaternary structure, interacts with AMPAR subunits GRIA1 and GRIA2.

The protein resides in the membrane. In terms of biological role, may regulate trafficking and current kinetics of AMPA-type glutamate receptor (AMPAR) at synapses. The chain is Protein shisa-8 from Homo sapiens (Human).